Here is a 171-residue protein sequence, read N- to C-terminus: Adenine phosphoribosyltransferase (171 aa).

This sequence belongs to the purine/pyrimidine phosphoribosyltransferase family. Homodimer.

The protein resides in the cytoplasm. It catalyses the reaction AMP + diphosphate = 5-phospho-alpha-D-ribose 1-diphosphate + adenine. It participates in purine metabolism; AMP biosynthesis via salvage pathway; AMP from adenine: step 1/1. Functionally, catalyzes a salvage reaction resulting in the formation of AMP, that is energically less costly than de novo synthesis. This chain is Adenine phosphoribosyltransferase, found in Trichlorobacter lovleyi (strain ATCC BAA-1151 / DSM 17278 / SZ) (Geobacter lovleyi).